Consider the following 166-residue polypeptide: Putative pre-16S rRNA nuclease (166 aa).

The protein belongs to the YqgF nuclease family.

It is found in the cytoplasm. Functionally, could be a nuclease involved in processing of the 5'-end of pre-16S rRNA. This chain is Putative pre-16S rRNA nuclease, found in Mesorhizobium japonicum (strain LMG 29417 / CECT 9101 / MAFF 303099) (Mesorhizobium loti (strain MAFF 303099)).